The chain runs to 774 residues: Subtilisin-like protease SBT3.5 (774 aa).

The first 23 residues, 1 to 23, serve as a signal peptide directing secretion; it reads MRNCRVLLVLVLSLVIVLNVVRA. A propeptide spans 24–108 (removed in mature form); the sequence is SDESKVHIVY…VMADSFYELA (85 aa). The Inhibitor I9 domain occupies 29–108; sequence VHIVYLGEKQ…VMADSFYELA (80 aa). Residues 112–621 enclose the Peptidase S8 domain; sequence TWDYLGLSVA…GGIVNPEKAA (510 aa). Asn-128 carries N-linked (GlcNAc...) asparagine glycosylation. The Charge relay system role is filled by Asp-142. Asn-201 is a glycosylation site (N-linked (GlcNAc...) asparagine). His-217 functions as the Charge relay system in the catalytic mechanism. Asn-232, Asn-394, Asn-409, and Asn-539 each carry an N-linked (GlcNAc...) asparagine glycan. A PA domain is found at 383-478; sequence SLVYPENAGF…ELGTDVLLYI (96 aa). Catalysis depends on Ser-552, which acts as the Charge relay system. N-linked (GlcNAc...) asparagine glycosylation is found at Asn-644, Asn-654, Asn-725, and Asn-755.

It belongs to the peptidase S8 family. In terms of tissue distribution, expressed in roots, leaves, stems, flower buds, developing siliques and mature seeds.

The protein localises to the secreted. The protein resides in the cell wall. Its function is as follows. Serine protease that cleaves the pectin methylesterase 17 (PME17) protein to release the PME17 mature form in the apoplasm. The protein is Subtilisin-like protease SBT3.5 of Arabidopsis thaliana (Mouse-ear cress).